The primary structure comprises 210 residues: Large ribosomal subunit protein uL4 (210 aa).

Part of the 50S ribosomal subunit. The N-terminus is blocked.

Functionally, one of the primary rRNA binding proteins, this protein initially binds near the 5'-end of the 23S rRNA. It is important during the early stages of 50S assembly. It makes multiple contacts with different domains of the 23S rRNA in the assembled 50S subunit and ribosome. Its function is as follows. Forms part of the polypeptide exit tunnel. This protein can be incorporated into E.coli ribosomes in vivo, which resulted in decreased peptidyltransferase (Ptase) activity of the hybrid ribosomes. The hybrid 50S subunits associate less well with 30S subunits to form the ribosome. This is Large ribosomal subunit protein uL4 (rplD) from Thermus thermophilus (strain ATCC 27634 / DSM 579 / HB8).